A 235-amino-acid chain; its full sequence is ATP-dependent Clp protease proteolytic subunit (235 aa).

The Nucleophile role is filled by Ser-123. Residue His-148 is part of the active site.

Belongs to the peptidase S14 family. Fourteen ClpP subunits assemble into 2 heptameric rings which stack back to back to give a disk-like structure with a central cavity, resembling the structure of eukaryotic proteasomes.

The protein localises to the cytoplasm. The enzyme catalyses Hydrolysis of proteins to small peptides in the presence of ATP and magnesium. alpha-casein is the usual test substrate. In the absence of ATP, only oligopeptides shorter than five residues are hydrolyzed (such as succinyl-Leu-Tyr-|-NHMec, and Leu-Tyr-Leu-|-Tyr-Trp, in which cleavage of the -Tyr-|-Leu- and -Tyr-|-Trp bonds also occurs).. Functionally, cleaves peptides in various proteins in a process that requires ATP hydrolysis. Has a chymotrypsin-like activity. Plays a major role in the degradation of misfolded proteins. This is ATP-dependent Clp protease proteolytic subunit from Novosphingobium aromaticivorans (strain ATCC 700278 / DSM 12444 / CCUG 56034 / CIP 105152 / NBRC 16084 / F199).